We begin with the raw amino-acid sequence, 171 residues long: S-ribosylhomocysteine lyase (171 aa).

H54, H58, and C128 together coordinate Fe cation.

It belongs to the LuxS family. Homodimer. The cofactor is Fe cation.

It catalyses the reaction S-(5-deoxy-D-ribos-5-yl)-L-homocysteine = (S)-4,5-dihydroxypentane-2,3-dione + L-homocysteine. Functionally, involved in the synthesis of autoinducer 2 (AI-2) which is secreted by bacteria and is used to communicate both the cell density and the metabolic potential of the environment. The regulation of gene expression in response to changes in cell density is called quorum sensing. Catalyzes the transformation of S-ribosylhomocysteine (RHC) to homocysteine (HC) and 4,5-dihydroxy-2,3-pentadione (DPD). The chain is S-ribosylhomocysteine lyase from Campylobacter concisus (strain 13826).